A 428-amino-acid chain; its full sequence is Elongation factor 1-alpha (428 aa).

A tr-type G domain is found at 5–225 (KPILNVAFIG…DAFQPPEKPT (221 aa)). The segment at 14 to 21 (GHVDAGKS) is G1. 14-21 (GHVDAGKS) lines the GTP pocket. Mg(2+) is bound at residue Ser21. The G2 stretch occupies residues 70–74 (GVTID). A G3 region spans residues 91-94 (DCPG). GTP contacts are provided by residues 91-95 (DCPGH) and 149-152 (NKMD). A G4 region spans residues 149–152 (NKMD). A G5 region spans residues 189–191 (ASL).

This sequence belongs to the TRAFAC class translation factor GTPase superfamily. Classic translation factor GTPase family. EF-Tu/EF-1A subfamily.

It is found in the cytoplasm. It catalyses the reaction GTP + H2O = GDP + phosphate + H(+). Its function is as follows. GTP hydrolase that promotes the GTP-dependent binding of aminoacyl-tRNA to the A-site of ribosomes during protein biosynthesis. In Methanococcus maripaludis (strain C6 / ATCC BAA-1332), this protein is Elongation factor 1-alpha.